The primary structure comprises 152 residues: MLQLHTIKPNPGAKHRKKRLGNGESSGLGKTCGKGNKGQKARSGGTIRPGFEGGQMPLHRRLPKKGFNNTRFQDKILIVNLSQLERVFEAGATVDENTLRAAKLVQGPCDAVKLLGNGTLTKNLNVVVDFVSASAREKVTQAGGTVTVLSEA.

The interval 1 to 66 (MLQLHTIKPN…PLHRRLPKKG (66 aa)) is disordered. Gly residues predominate over residues 24-36 (ESSGLGKTCGKGN).

This sequence belongs to the universal ribosomal protein uL15 family. In terms of assembly, part of the 50S ribosomal subunit.

In terms of biological role, binds to the 23S rRNA. The protein is Large ribosomal subunit protein uL15 of Akkermansia muciniphila (strain ATCC BAA-835 / DSM 22959 / JCM 33894 / BCRC 81048 / CCUG 64013 / CIP 107961 / Muc).